Reading from the N-terminus, the 319-residue chain is MNPNYLDFEQPIADLEAKIQELRNASAGPAVNVEAEVHALQDKLRMRTAQIFRNLTSWQVLQLARHPSRPYTADYLRVMFDEFQELAGDRAFADDKAIMGGLARINGRAVMVIGHQKGRDTKEKIKRNFGMPKPEGYRKALRLMKMAERFGLPVLTLIDTAGAWPGIDAESRGQSEAIARNLIEMAELKVPIICTVIGEGGSGGALALGVGDRTVMLEYAVYSTITPEGCASILWKDAGKAKDAAEQLGLTAPRLKSLGLVDKVVREPTGGAHRNPTQMAKRLKAVLLNELDALDKLSTEQLLEQRYARLRSYGTYEAA.

Positions 38-293 constitute a CoA carboxyltransferase C-terminal domain; sequence HALQDKLRMR…KAVLLNELDA (256 aa).

Belongs to the AccA family. In terms of assembly, acetyl-CoA carboxylase is a heterohexamer composed of biotin carboxyl carrier protein (AccB), biotin carboxylase (AccC) and two subunits each of ACCase subunit alpha (AccA) and ACCase subunit beta (AccD).

The protein resides in the cytoplasm. It carries out the reaction N(6)-carboxybiotinyl-L-lysyl-[protein] + acetyl-CoA = N(6)-biotinyl-L-lysyl-[protein] + malonyl-CoA. The protein operates within lipid metabolism; malonyl-CoA biosynthesis; malonyl-CoA from acetyl-CoA: step 1/1. Component of the acetyl coenzyme A carboxylase (ACC) complex. First, biotin carboxylase catalyzes the carboxylation of biotin on its carrier protein (BCCP) and then the CO(2) group is transferred by the carboxyltransferase to acetyl-CoA to form malonyl-CoA. This Stenotrophomonas maltophilia (strain K279a) protein is Acetyl-coenzyme A carboxylase carboxyl transferase subunit alpha.